The following is a 323-amino-acid chain: Phosphatidylethanolamine:ceramide ethanolaminephosphotransferase (323 aa).

The Cytoplasmic segment spans residues 1–26 (MAVPPVEMYSGSFWNRMRKPLPLRTQ). A helical transmembrane segment spans residues 27–47 (VIRFTVVFVIVSFILVVALQI). The Extracellular segment spans residues 48-74 (THERMPDPKVTKPLPDLGFELLTKVPG). A helical membrane pass occupies residues 75 to 95 (MYVLADCCIGFLNILSVFTAF). At 96–147 (KLYLLHRHCVGSGEPELPCNIPGVSRFFLSVWLCKENCRIELRNIHTIAWIR) the chain is on the cytoplasmic side. Residues 148 to 168 (FITSYALLLLSRSIIMVVTSL) form a helical membrane-spanning segment. Residues 169–187 (PNPDDLCQNPPKIENRVKD) lie on the Extracellular side of the membrane. The helical transmembrane segment at 188-208 (ILLTVLTAGAGSIHCGDLMYS) threads the bilayer. Residues 209–233 (GHTVILTLHLMFHWIYGAMVHWSFR) lie on the Cytoplasmic side of the membrane. The helical transmembrane segment at 234–254 (PVVTVVAIFGYYCIVASRFHY) threads the bilayer. The Extracellular segment spans residues 255–257 (TDD). The helical transmembrane segment at 258-278 (VLVAIYLTIATFIAVGHNADG) threads the bilayer. The Cytoplasmic segment spans residues 279 to 323 (APWQLQLFIRWWPCCGANSREVAEDGVPVAIVIKNEEMMNFEGKS).

This sequence belongs to the sphingomyelin synthase family.

It localises to the membrane. The catalysed reaction is an N-acylsphing-4-enine + a 1,2-diacyl-sn-glycero-3-phosphoethanolamine = an N-acylsphing-4-enine 1-phosphoethanolamine + a 1,2-diacyl-sn-glycerol. The enzyme catalyses an N-acylsphinganine + a 1,2-diacyl-sn-glycero-3-phosphoethanolamine = an N-acylsphinganine-1-phosphoethanolamine + a 1,2-diacyl-sn-glycerol. Predominantly synthesizes ethanolamine-phosphorylceramide (EPC), with minimal sphingomyelin (SM)/inositol phosphorylceramide (IPC) synthase activity. Specificity is likely to be defined by residues in the lumenal catalytic domain that interact with the polar head groups of the phospholipid donors. EPC is synthesized by both stages of the parasite life cycle, bloodstream forms (BSF) and procyclic forms (PCF), by transferring the phosphoethanolamine from a 1,2-diacyl-sn-glycero-3-phosphoethanolamine to an N-acylsphing-4-enine (ceramide) or an N-acylsphinganine (dihydroceramide). Similarly, SM is synthesized by transferring the phosphocholine from a 1,2-diacyl-sn-glycero-3-phosphocholine to ceramide or dihydroceramide by BSF and PCF, while IPC is confined to PCF. The ceramide/dihydroceramide ratios are skewed towards dihydroceramide in PCF parasites and ceramide in BSF parasites, this is likely due to differential expression and/or regulation of dihydroceramide desaturase, the enzyme responsible for converting dihydroceramide to ceramide. This is Phosphatidylethanolamine:ceramide ethanolaminephosphotransferase from Trypanosoma brucei brucei.